Consider the following 217-residue polypeptide: MSFISKIRCAFTLGQGVLIENEALKETNDPILFFNNWLKKAQDTGIILPESMSISTCTPEGRPSSRMVLLKEVDSKGFVFFTNYDSRKAHDLEANPFAALLFHWNILQRQVRIEGRVERISTAQSNAYFQSRGRGSRIGAWASHQSQELNDRQTLVERVKYFEEKFAGKEIPLPEFWGGYRVIPESIEFWQGKADRLHDRFVYQPTEKNWTVKRLNP.

FMN-binding positions include 66–71 (RMVLLK), 81–82 (FT), Arg-87, Lys-88, and Gln-110. Lys-71 is a binding site for substrate. Substrate-binding residues include Tyr-128, Arg-132, and Ser-136. Residues 145 to 146 (QS) and Trp-190 contribute to the FMN site. A substrate-binding site is contributed by 196–198 (RLH). Arg-200 contacts FMN.

It belongs to the pyridoxamine 5'-phosphate oxidase family. In terms of assembly, homodimer. FMN is required as a cofactor.

The enzyme catalyses pyridoxamine 5'-phosphate + O2 + H2O = pyridoxal 5'-phosphate + H2O2 + NH4(+). It catalyses the reaction pyridoxine 5'-phosphate + O2 = pyridoxal 5'-phosphate + H2O2. It participates in cofactor metabolism; pyridoxal 5'-phosphate salvage; pyridoxal 5'-phosphate from pyridoxamine 5'-phosphate: step 1/1. Its pathway is cofactor metabolism; pyridoxal 5'-phosphate salvage; pyridoxal 5'-phosphate from pyridoxine 5'-phosphate: step 1/1. Catalyzes the oxidation of either pyridoxine 5'-phosphate (PNP) or pyridoxamine 5'-phosphate (PMP) into pyridoxal 5'-phosphate (PLP). The protein is Pyridoxine/pyridoxamine 5'-phosphate oxidase of Psychromonas ingrahamii (strain DSM 17664 / CCUG 51855 / 37).